Reading from the N-terminus, the 901-residue chain is Probable inorganic carbon transporter subunit DabA (901 aa).

4 residues coordinate Zn(2+): Cys424, Asp426, His606, and Cys621.

This sequence belongs to the inorganic carbon transporter (TC 9.A.2) DabA family. Forms a complex with DabB. The cofactor is Zn(2+).

It is found in the cell membrane. Part of an energy-coupled inorganic carbon pump. This Staphylococcus aureus (strain Mu3 / ATCC 700698) protein is Probable inorganic carbon transporter subunit DabA.